Reading from the N-terminus, the 297-residue chain is Iron-sulfur cluster assembly SufBD family protein ycf24 (297 aa).

This sequence belongs to the iron-sulfur cluster assembly SufBD family.

The protein localises to the plastid. Its subcellular location is the chloroplast. The chain is Iron-sulfur cluster assembly SufBD family protein ycf24 (ycf24) from Antithamnion sp. (Red alga).